The chain runs to 286 residues: Uridylate cyclase (286 aa).

Positions 90 to 223 (TAIFVDIRKS…DAVTKAANMS (134 aa)) constitute a Guanylate cyclase domain. F93 provides a ligand contact to a ribonucleoside 5'-triphosphate. Mn(2+) is bound by residues D95, I96, and D140.

The protein belongs to the adenylyl cyclase class-4/guanylyl cyclase family. Pyrimidine cyclase subfamily. As to quaternary structure, homodimer. Requires Mn(2+) as cofactor.

The protein localises to the cytoplasm. It carries out the reaction UTP = 3',5'-cyclic UMP + diphosphate. Its function is as follows. Pycsar (pyrimidine cyclase system for antiphage resistance) provides immunity against bacteriophage. The pyrimidine cyclase (PycC) synthesizes cyclic nucleotides in response to infection; these serve as specific second messenger signals. The signals activate the adjacent effector, leading to bacterial cell death and abortive phage infection. A clade C Pycsar system. In terms of biological role, the pyrimidine cyclase gene of a two-gene Pycsar system, weakly generates cyclic UMP (cUMP) from UTP, has little to no activity on ATP, CTP or GTP. Expression of this and adjacent effector TpPycTM (AC A0A1T4LJG1) probably confers resistance to bacteriophage. The genes are probably only expressed in response to bacteriophage infection. The protein is Uridylate cyclase of Treponema porcinum.